The following is a 1005-amino-acid chain: MILPNYFQDPNTLHVNTVEHHAYFIPHQQNETALSGKREQSDYFTLLNGQWDFNYFQSYHDLPDNFLDIAFEHKIPVPANWQNHGFDHHHYTNINYPFPFEPPFVPHQNPCGVYHRTLQLTPKHKRYLLNFEGVDSCLFVYVNKQFVGYSQISHNTSEFDVSDYLQAGTNHLTVVVLKWCDGSYLEDQDKFRMSGIFRDVYLLEREQNYLQDFFIQYELDDELRHANLKVETLFSRQPQAIEYQLLNPNGFTVFNQTDTHLNIEVEDIQLWNAEKPQLYTLILHTAEEVIVQKIGFRKVEIKDGILLFNQQPIKFKGVNRHDSDPKTGYAITYAQAHKDLQLMKQHNINAIRTAHYPNAPWFSELCDQYGFYLIGESDVESHGASMLTVKMPEPSILLNHQNDLQTERIRQDMIDNYCYFARDPLFKKAILDRQQANVERDKNRTSIIIWSLGNEAGYGANFEAAAAWIKQRDKSRLVHYESSIYQHSADNNDLSNLDFYSEMYGSTEDIDRYCATAQRKPFVLCEYSHAMGNSNGDAEDYWQAFHRHPQSCGGFVWEWCDHAPYRANGQFGYGGDFGESPHDGNFCMDGLVSPDRIPHSNLLELKNVNRPARAELIDNQIVIHNYLDFTDLADYLTIDYEFVENGVVTSGGNLSVSCKPHSSVILPIELPKNNGHLWLLNLDYRLNTATELLEAEHSLGFEQLNLFSENKLVLPKFTIEKSTFEVQEDHFRINVHNGQFSYQLDKQKGIFSRIEKAGKAIIQQPLDFNIWRAPTDNDRLIREAWQNAGYDKAYTRAYEIQWQQSEQAVEFSVKSAIVSISRGRILTLDIRYRIFNDGQISVEINAIRPTELPYLPRFGLRFWLAKAENTVEYFGYGEQESYVDKHHLANLGIYHTTAKQNHTDYVKPQENGSHYGCEYLKSENLFVSASQPFSFNLSPYTQEELTEKKHYYELQESDYSVLCIDYKMSGIGSNSCGPNLKDQYRLMESEFKIRFDLIFDKTIRQ.

The active-site Proton donor is the Glu455. The active-site Nucleophile is the Glu526.

This sequence belongs to the glycosyl hydrolase 2 family.

The enzyme catalyses Hydrolysis of terminal non-reducing beta-D-galactose residues in beta-D-galactosides.. This Actinobacillus pleuropneumoniae (Haemophilus pleuropneumoniae) protein is Beta-galactosidase (lacZ).